Reading from the N-terminus, the 956-residue chain is MVFCGDGGLSCESIDFALCCLRGRSGNYVQSRILPMADASPDPSKPDTLVLIDGHALAFRSYFALPPLNNSKGEMTHAIVGFMKLLLRLARQKSNQVIVVFDPPVKTFRHEQYEGYKSGRAQTPEDLPGQINRIRALVDALGFPRLEEPGYEADDVIASLTRMAEGKGYEVRIVTSDRDAYQLLDEHVKVIANDFSLIGPAQVEEKYGVTVRQWVDYRALTGDASDNIPGAKGIGPKTAAKLLQEYGTLEKVYEAAHAGTLKPDGTRKKLLDSEENVKFSHDLSCMVTDLPLDIEFGVRRLPDNPLVTEDLLTELELHSLRPMILGLNGPEQDGHAPDDLLEREHAQTPEEDEAAALPAFSAPELAEWQTPAEGAVWGYVLSREDDLTAALLAAATFEDGVARPAPVSEPDEWAQAEAPENLFGELLPSDKPLTKKEQKALEKAQKDAEKARAKLREQFPATVDEAEFVGQRTVTAAAAKALAAHLSVRGTVVEPGDDPLLYAYLLDPANTNMPVVAKRYLDREWPADAPTRAAITGHLLRELPPLLDDARRKMYDEMEKPLSGVLGRMEVRGVQVDSDFLQTLSIQAGVRLADLESQIHEYAGEEFHIRSPKQLETVLYDKLELASSKKTKLTGQRSTAVSALEPLRDAHPIIPLVLEFRELDKLRGTYLDPIPNLVNPHTGRLHTTFAQTAVATGRLSSLNPNLQNIPIRSELGREIRKGFIAEDGFTLIAADYSQIELRLLAHIADDPLMQQAFVEGADIHRRTAAQVLGLDEATVDANQRRAAKTVNFGVLYGMSAHRLSNDLGIPYAEAATFIEIYFATYPGIRRYINHTLDFGRTHGYVETLYGRRRYVPGLSSRNRVQREAEERLAYNMPIQGTAADIMKLAMVQLDPQLDAIGARMLLQVHDELLIEAPLDKAEQVAALTKKVMENVVQLKVPLAVEVGTGPNWFDTK.

In terms of domain architecture, 5'-3' exonuclease spans 209-296 (VTVRQWVDYR…VTDLPLDIEF (88 aa)).

Belongs to the DNA polymerase type-A family. As to quaternary structure, single-chain monomer with multiple functions.

It carries out the reaction DNA(n) + a 2'-deoxyribonucleoside 5'-triphosphate = DNA(n+1) + diphosphate. A DNA polymerase, required for DNA repair after DNA damage induced by ionizing radiation (IR); this is not the major DNA polymerase. Following severe irradiation (7 kGy of gamma irradiation) genomic DNA is fragmented. DNA is progressively degraded for the first 1.5 hours after IR, in a step promoted by RecA and counterbalanced by DNA Pol I and Pol III, followed by massive DNA synthesis and genome reassembly in the next hour. Optimal priming of DNA synthesis requires both RecA and RadA, Pol III initiates DNA synthesis while both Pol I and Pol III are required for its continuation. May also have 5'-3' exonuclease activity. The protein is DNA polymerase I (polA) of Deinococcus radiodurans (strain ATCC 13939 / DSM 20539 / JCM 16871 / CCUG 27074 / LMG 4051 / NBRC 15346 / NCIMB 9279 / VKM B-1422 / R1).